A 269-amino-acid chain; its full sequence is Malonyl-[acyl-carrier protein] O-methyltransferase (269 aa).

The protein belongs to the methyltransferase superfamily.

The catalysed reaction is malonyl-[ACP] + S-adenosyl-L-methionine = malonyl-[ACP] methyl ester + S-adenosyl-L-homocysteine. The protein operates within cofactor biosynthesis; biotin biosynthesis. In terms of biological role, converts the free carboxyl group of a malonyl-thioester to its methyl ester by transfer of a methyl group from S-adenosyl-L-methionine (SAM). It allows to synthesize pimeloyl-ACP via the fatty acid synthetic pathway. The protein is Malonyl-[acyl-carrier protein] O-methyltransferase of Bacillus anthracis.